Reading from the N-terminus, the 809-residue chain is F-BAR domain only protein 2 (809 aa).

The F-BAR domain occupies 3–250 (MAHFVENFWG…NMANTTIESL (248 aa)). Residues 3–274 (MAHFVENFWG…PGLIEFEECD (272 aa)) form a mediates dimerization and binding to membranes enriched in Pi(4,5)-P2 and induces their tubulation region. Positions 87–156 (HLDLVRKLQE…CVEQERLKKE (70 aa)) form a coiled coil. A Glycyl lysine isopeptide (Lys-Gly) (interchain with G-Cter in SUMO2) cross-link involves residue Lys297. The segment at 301 to 352 (DAESVECPDADSLNIPDVDEEGFSIKPEANQNDTKENHFYSSSDSDSEDEEP) is disordered. Position 312 is a phosphoserine (Ser312). Thr385 bears the Phosphothreonine mark. Phosphoserine occurs at positions 387, 394, 402, and 403. Residues 390-416 (VSRHSPVQMNRNSSNEELTKSKPSSLP) are compositionally biased toward polar residues. 2 disordered regions span residues 390-422 (VSRH…KGTN) and 435-536 (LESS…PVSL). Residues 435-456 (LESSSAPLTSSSSARPTTPLSL) are compositionally biased toward low complexity. Phosphoserine occurs at positions 487, 492, 495, 507, 509, 510, and 532. Residues 501–520 (PLARAESSSSISSSASLSAA) are compositionally biased toward low complexity. The tract at residues 520–809 (ANTPTVGVSR…FATGRYLADC (290 aa)) is mediates interaction with DAB2, EPS15, EPS15R and ITSN1. In terms of domain architecture, MHD spans 541-808 (TLPVAIALTE…RFATGRYLAD (268 aa)).

The protein belongs to the FCHO family. Homodimer; disulfide-linked. May form homotetramer. Interacts with AP2A1. Interacts with EPS15, EPS15R, ITSN1 and ITSN2; recruit those scaffolding proteins which in turn may interact with the adaptor protein complex AP-2 at the plasma membrane. Interacts with DAB2 (via DPF motifs); mediates LDL receptor/LDLR endocytosis. In terms of processing, ubiquitinated. Mainly undergoes monoubiquitination but also polyubiquitination. Ubiquitously expressed (at protein level).

It is found in the membrane. The protein resides in the clathrin-coated pit. In terms of biological role, functions in an early step of clathrin-mediated endocytosis. Has both a membrane binding/bending activity and the ability to recruit proteins essential to the formation of functional clathrin-coated pits. Has a lipid-binding activity with a preference for membranes enriched in phosphatidylserine and phosphoinositides (Pi(4,5) biphosphate) like the plasma membrane. Its membrane-bending activity might be important for the subsequent action of clathrin and adaptors in the formation of clathrin-coated vesicles. Involved in adaptor protein complex AP-2-dependent endocytosis of the transferrin receptor, it also functions in the AP-2-independent endocytosis of the LDL receptor. This Mus musculus (Mouse) protein is F-BAR domain only protein 2 (Fcho2).